The following is a 344-amino-acid chain: Anthranilate phosphoribosyltransferase 2 (344 aa).

5-phospho-alpha-D-ribose 1-diphosphate-binding positions include G81, 84 to 85 (GD), T89, 91 to 94 (NIST), 109 to 117 (KHGNRALSS), and A121. G81 is an anthranilate binding site. S93 provides a ligand contact to Mg(2+). Position 112 (N112) interacts with anthranilate. R167 contacts anthranilate. The Mg(2+) site is built by D226 and E227.

It belongs to the anthranilate phosphoribosyltransferase family. Homodimer. The cofactor is Mg(2+).

It carries out the reaction N-(5-phospho-beta-D-ribosyl)anthranilate + diphosphate = 5-phospho-alpha-D-ribose 1-diphosphate + anthranilate. Its pathway is amino-acid biosynthesis; L-tryptophan biosynthesis; L-tryptophan from chorismate: step 2/5. Catalyzes the transfer of the phosphoribosyl group of 5-phosphorylribose-1-pyrophosphate (PRPP) to anthranilate to yield N-(5'-phosphoribosyl)-anthranilate (PRA). This is Anthranilate phosphoribosyltransferase 2 from Ralstonia nicotianae (strain ATCC BAA-1114 / GMI1000) (Ralstonia solanacearum).